A 97-amino-acid polypeptide reads, in one-letter code: Protein Vpr (97 aa).

The homooligomerization stretch occupies residues 1-42 (MEQAPEDQGPQREPYNEWTLELLEELKREAVRHFPRPWLHSL). A phosphoserine; by host mark is found at S79, S95, and S97.

It belongs to the HIV-1 VPR protein family. Homooligomer, may form homodimer. Interacts with p6-gag region of the Pr55 Gag precursor protein through a (Leu-X-X)4 motif near the C-terminus of the P6gag protein. Interacts with host UNG. May interact with host RAD23A/HHR23A. Interacts with host VPRBP/DCAF1, leading to hijack the CUL4A-RBX1-DDB1-DCAF1/VPRBP complex, mediating ubiquitination of host proteins such as TERT and ZGPAT and arrest of the cell cycle in G2 phase. Phosphorylated on several residues by host. These phosphorylations regulate VPR activity for the nuclear import of the HIV-1 pre-integration complex.

Its subcellular location is the virion. It is found in the host nucleus. It localises to the host extracellular space. In terms of biological role, during virus replication, may deplete host UNG protein, and incude G2-M cell cycle arrest. Acts by targeting specific host proteins for degradation by the 26S proteasome, through association with the cellular CUL4A-DDB1 E3 ligase complex by direct interaction with host VPRPB/DCAF-1. Cell cycle arrest reportedly occurs within hours of infection and is not blocked by antiviral agents, suggesting that it is initiated by the VPR carried into the virion. Additionally, VPR induces apoptosis in a cell cycle dependent manner suggesting that these two effects are mechanistically linked. Detected in the serum and cerebrospinal fluid of AIDS patient, VPR may also induce cell death to bystander cells. Functionally, during virus entry, plays a role in the transport of the viral pre-integration (PIC) complex to the host nucleus. This function is crucial for viral infection of non-dividing macrophages. May act directly at the nuclear pore complex, by binding nucleoporins phenylalanine-glycine (FG)-repeat regions. The protein is Protein Vpr of Human immunodeficiency virus type 1 group M subtype B (isolate ARV2/SF2) (HIV-1).